The sequence spans 251 residues: Hydroxyacylglutathione hydrolase (251 aa).

7 residues coordinate Zn(2+): H53, H55, D57, H58, H110, D127, and H165.

Belongs to the metallo-beta-lactamase superfamily. Glyoxalase II family. Monomer. Requires Zn(2+) as cofactor.

The catalysed reaction is an S-(2-hydroxyacyl)glutathione + H2O = a 2-hydroxy carboxylate + glutathione + H(+). It participates in secondary metabolite metabolism; methylglyoxal degradation; (R)-lactate from methylglyoxal: step 2/2. In terms of biological role, thiolesterase that catalyzes the hydrolysis of S-D-lactoyl-glutathione to form glutathione and D-lactic acid. The chain is Hydroxyacylglutathione hydrolase from Salmonella paratyphi C (strain RKS4594).